Consider the following 597-residue polypeptide: Cytosolic Fe-S cluster assembly factor nar1 (597 aa).

Cys-20, Cys-61, Cys-64, Cys-67, Cys-209, and Cys-264 together coordinate [4Fe-4S] cluster. Positions 419–447 (PARASRLPGARQSATSAGGSRRQLASRNA) are disordered. The span at 430-447 (QSATSAGGSRRQLASRNA) shows a compositional bias: polar residues. [4Fe-4S] cluster contacts are provided by Cys-464 and Cys-468. The tract at residues 482 to 504 (EAASNMSVESQTEPPEAALKPTP) is disordered. Residues 485-494 (SNMSVESQTE) are compositionally biased toward polar residues.

This sequence belongs to the NARF family.

Functionally, component of the cytosolic Fe/S protein assembly machinery. Required for maturation of extramitochondrial Fe/S proteins. May play a role in the transfer of pre-assembled Fe/S clusters to target apoproteins. The protein is Cytosolic Fe-S cluster assembly factor nar1 (nar1) of Aspergillus clavatus (strain ATCC 1007 / CBS 513.65 / DSM 816 / NCTC 3887 / NRRL 1 / QM 1276 / 107).